We begin with the raw amino-acid sequence, 161 residues long: Ribonuclease H (161 aa).

The RNase H type-1 domain occupies 12–155; that stretch reads QPQHVVIYTD…ADALANKGVE (144 aa). Positions 21, 59, 81, and 147 each coordinate Mg(2+).

This sequence belongs to the RNase H family. In terms of assembly, monomer. The cofactor is Mg(2+).

The protein resides in the cytoplasm. It carries out the reaction Endonucleolytic cleavage to 5'-phosphomonoester.. Endonuclease that specifically degrades the RNA of RNA-DNA hybrids. The polypeptide is Ribonuclease H (Polaromonas naphthalenivorans (strain CJ2)).